Here is an 87-residue protein sequence, read N- to C-terminus: Sec-independent protein translocase protein TatA (87 aa).

Residues 3–23 (IFGIGLPEMIVILVVALLIFG) form a helical membrane-spanning segment. The disordered stretch occupies residues 61–87 (EGVKVSTSASEPEKVVDVSSATNTNKN).

It belongs to the TatA/E family. As to quaternary structure, forms a complex with TatC.

It is found in the cell inner membrane. In terms of biological role, part of the twin-arginine translocation (Tat) system that transports large folded proteins containing a characteristic twin-arginine motif in their signal peptide across membranes. TatA could form the protein-conducting channel of the Tat system. The chain is Sec-independent protein translocase protein TatA from Trichodesmium erythraeum (strain IMS101).